A 122-amino-acid chain; its full sequence is Large ribosomal subunit protein bL19 (122 aa).

Belongs to the bacterial ribosomal protein bL19 family.

In terms of biological role, this protein is located at the 30S-50S ribosomal subunit interface and may play a role in the structure and function of the aminoacyl-tRNA binding site. In Chlamydia abortus (strain DSM 27085 / S26/3) (Chlamydophila abortus), this protein is Large ribosomal subunit protein bL19.